Reading from the N-terminus, the 645-residue chain is Translation factor GUF1, mitochondrial (645 aa).

A tr-type G domain is found at Glu-44–Thr-228. Residues Ala-53–Ser-60, Asp-120–His-124, and Asn-174–Asp-177 contribute to the GTP site.

The protein belongs to the TRAFAC class translation factor GTPase superfamily. Classic translation factor GTPase family. LepA subfamily.

The protein resides in the mitochondrion inner membrane. It carries out the reaction GTP + H2O = GDP + phosphate + H(+). Its function is as follows. Promotes mitochondrial protein synthesis. May act as a fidelity factor of the translation reaction, by catalyzing a one-codon backward translocation of tRNAs on improperly translocated ribosomes. Binds to mitochondrial ribosomes in a GTP-dependent manner. This chain is Translation factor GUF1, mitochondrial, found in Saccharomyces cerevisiae (strain ATCC 204508 / S288c) (Baker's yeast).